A 269-amino-acid chain; its full sequence is MATH domain and coiled-coil domain-containing protein At2g01790 (269 aa).

An MATH domain is found at 6-134; it reads AVKKLWVINN…NGEVDIVAEV (129 aa). A coiled-coil region spans residues 228–269; the sequence is KLDWLEKKLKETGKSRLQEIEEDLKDLKVKCADMDALLEFLR.

In Arabidopsis thaliana (Mouse-ear cress), this protein is MATH domain and coiled-coil domain-containing protein At2g01790.